The primary structure comprises 876 residues: Alanine--tRNA ligase (876 aa).

At K74 the chain carries N6-acetyllysine. Residues H564, H568, C666, and H670 each coordinate Zn(2+).

The protein belongs to the class-II aminoacyl-tRNA synthetase family. Homotetramer. It depends on Zn(2+) as a cofactor.

The protein localises to the cytoplasm. It carries out the reaction tRNA(Ala) + L-alanine + ATP = L-alanyl-tRNA(Ala) + AMP + diphosphate. Its function is as follows. Catalyzes the attachment of alanine to tRNA(Ala) in a two-step reaction: alanine is first activated by ATP to form Ala-AMP and then transferred to the acceptor end of tRNA(Ala). Also edits incorrectly charged Ser-tRNA(Ala) and Gly-tRNA(Ala) via its editing domain. This Escherichia coli O1:K1 / APEC protein is Alanine--tRNA ligase.